We begin with the raw amino-acid sequence, 353 residues long: Photosystem II protein D1 (353 aa).

Thr2 carries the post-translational modification N-acetylthreonine. Phosphothreonine is present on Thr2. Transmembrane regions (helical) follow at residues 29–46 (YIGW…TATS), 118–133 (HFLL…EWEL), and 142–156 (WIAV…AATA). A chlorophyll a-binding site is contributed by His118. Tyr126 is a pheophytin a binding site. 2 residues coordinate [CaMn4O5] cluster: Asp170 and Glu189. A helical membrane pass occupies residues 197 to 218 (FHMLGVAGVFGGSLFSAMHGSL). Residue His198 participates in chlorophyll a binding. Residues His215 and 264 to 265 (SF) contribute to the a quinone site. Fe cation is bound at residue His215. His272 provides a ligand contact to Fe cation. Residues 274–288 (FLAAWPVVGIWFTAL) form a helical membrane-spanning segment. [CaMn4O5] cluster is bound by residues His332, Glu333, Asp342, and Ala344. Residues 345–353 (AMEAPSVNG) constitute a propeptide that is removed on maturation.

Belongs to the reaction center PufL/M/PsbA/D family. In terms of assembly, PSII is composed of 1 copy each of membrane proteins PsbA, PsbB, PsbC, PsbD, PsbE, PsbF, PsbH, PsbI, PsbJ, PsbK, PsbL, PsbM, PsbT, PsbX, PsbY, PsbZ, Psb30/Ycf12, at least 3 peripheral proteins of the oxygen-evolving complex and a large number of cofactors. It forms dimeric complexes. The cofactor is The D1/D2 heterodimer binds P680, chlorophylls that are the primary electron donor of PSII, and subsequent electron acceptors. It shares a non-heme iron and each subunit binds pheophytin, quinone, additional chlorophylls, carotenoids and lipids. D1 provides most of the ligands for the Mn4-Ca-O5 cluster of the oxygen-evolving complex (OEC). There is also a Cl(-1) ion associated with D1 and D2, which is required for oxygen evolution. The PSII complex binds additional chlorophylls, carotenoids and specific lipids.. Tyr-161 forms a radical intermediate that is referred to as redox-active TyrZ, YZ or Y-Z. Post-translationally, C-terminally processed by CTPA; processing is essential to allow assembly of the oxygen-evolving complex and thus photosynthetic growth.

Its subcellular location is the plastid. It localises to the chloroplast thylakoid membrane. The catalysed reaction is 2 a plastoquinone + 4 hnu + 2 H2O = 2 a plastoquinol + O2. Photosystem II (PSII) is a light-driven water:plastoquinone oxidoreductase that uses light energy to abstract electrons from H(2)O, generating O(2) and a proton gradient subsequently used for ATP formation. It consists of a core antenna complex that captures photons, and an electron transfer chain that converts photonic excitation into a charge separation. The D1/D2 (PsbA/PsbD) reaction center heterodimer binds P680, the primary electron donor of PSII as well as several subsequent electron acceptors. This chain is Photosystem II protein D1, found in Phaseolus vulgaris (Kidney bean).